A 463-amino-acid polypeptide reads, in one-letter code: Rop guanine nucleotide exchange factor 4 (463 aa).

2 disordered regions span residues 1–25 (MESS…YRRT) and 55–87 (GHEE…SDID). Acidic residues predominate over residues 59–68 (DVSEDAEEPK). Over residues 69–78 (DDVVNDVHGD) the composition is skewed to basic and acidic residues. Residues 84 to 463 (SDIDSAEDAE…VDRTVRNRDD (380 aa)) enclose the PRONE domain.

As to quaternary structure, interacts with ARAC10/ROP11. In terms of tissue distribution, expressed in root vascular tissue and trichoblast cell files. Expressed in root metaxylem cell files. Expressed in guard cells of cotyledons, rosette leaves, sepals, petal, stigmas and siliques. Expressed in root metaxylem cell files.

The protein localises to the cytoplasm. The protein resides in the cell membrane. Its function is as follows. Guanine-nucleotide exchange factor (GEF) that acts as an activator of Rop (Rho of plants) GTPases by promoting the exchange of GDP for GTP. In association with ROPGEF1, acts as a specific regulator of ARAC10/ROP11 function in ABA-mediated stomatal closure. The polypeptide is Rop guanine nucleotide exchange factor 4 (ROPGEF4) (Arabidopsis thaliana (Mouse-ear cress)).